Consider the following 361-residue polypeptide: Chorismate synthase (361 aa).

Residues Arg48 and Arg54 each contribute to the NADP(+) site. FMN contacts are provided by residues Arg125–Ser127, Asn238–Ala239, Gly278, Lys293–Ser297, and Arg319.

It belongs to the chorismate synthase family. In terms of assembly, homotetramer. Requires FMNH2 as cofactor.

It carries out the reaction 5-O-(1-carboxyvinyl)-3-phosphoshikimate = chorismate + phosphate. It participates in metabolic intermediate biosynthesis; chorismate biosynthesis; chorismate from D-erythrose 4-phosphate and phosphoenolpyruvate: step 7/7. Functionally, catalyzes the anti-1,4-elimination of the C-3 phosphate and the C-6 proR hydrogen from 5-enolpyruvylshikimate-3-phosphate (EPSP) to yield chorismate, which is the branch point compound that serves as the starting substrate for the three terminal pathways of aromatic amino acid biosynthesis. This reaction introduces a second double bond into the aromatic ring system. The chain is Chorismate synthase from Escherichia coli (strain K12 / MC4100 / BW2952).